The sequence spans 545 residues: Chaperonin GroEL 2 (545 aa).

ATP is bound by residues 30–33 (TLGP), Lys51, 87–91 (DGTTT), Gly415, 479–481 (NAA), and Asp495.

Belongs to the chaperonin (HSP60) family. Forms a cylinder of 14 subunits composed of two heptameric rings stacked back-to-back. Interacts with the co-chaperonin GroES.

The protein resides in the cytoplasm. It carries out the reaction ATP + H2O + a folded polypeptide = ADP + phosphate + an unfolded polypeptide.. Functionally, together with its co-chaperonin GroES, plays an essential role in assisting protein folding. The GroEL-GroES system forms a nano-cage that allows encapsulation of the non-native substrate proteins and provides a physical environment optimized to promote and accelerate protein folding. The polypeptide is Chaperonin GroEL 2 (Escherichia coli O1:K1 / APEC).